The following is a 505-amino-acid chain: ATP synthase subunit alpha (505 aa).

170–177 is an ATP binding site; that stretch reads GDRQTGKT.

This sequence belongs to the ATPase alpha/beta chains family. In terms of assembly, F-type ATPases have 2 components, CF(1) - the catalytic core - and CF(0) - the membrane proton channel. CF(1) has five subunits: alpha(3), beta(3), gamma(1), delta(1), epsilon(1). CF(0) has four main subunits: a(1), b(1), b'(1) and c(9-12).

It localises to the cellular thylakoid membrane. The catalysed reaction is ATP + H2O + 4 H(+)(in) = ADP + phosphate + 5 H(+)(out). Produces ATP from ADP in the presence of a proton gradient across the membrane. The alpha chain is a regulatory subunit. The protein is ATP synthase subunit alpha of Synechococcus sp. (strain ATCC 27144 / PCC 6301 / SAUG 1402/1) (Anacystis nidulans).